A 55-amino-acid chain; its full sequence is Lantibiotic epilancin 15X (55 aa).

A propeptide spans 1–24 (cleaved by ElxP); sequence MKKELFDLNLNKDIEAQKSDLNPQ. At S25 the chain carries D-lactate; by the dehydratase ElxB and the dehydrogenase ElxO. Residue S27 is modified to 2,3-didehydroalanine (Ser); by the dehydratase ElxB. Residues T31 and T32 each carry the 2,3-didehydrobutyrine; by the dehydratase ElxB modification. The segment at residues 36–40 is a cross-link (lanthionine (Ser-Cys); by the dehydratase ElxB and the cyclase ElxC); that stretch reads SKKLC. 2 consecutive cross-links (beta-methyllanthionine (Thr-Cys); by the dehydratase ElxB and the cyclase ElxC) follow at residues 44–47 and 46–49; these read TLTC and TCGC. T52 carries the 2,3-didehydrobutyrine; by the dehydratase ElxB modification.

Post-translationally, maturation of this lantibiotic involves the enzymatic conversion of Thr, and Ser into dehydrated AA by ElxB and the formation of thioether bonds with cysteine by the cyclase ElxC. The next steps are cleavage of the leader peptide by ElxP and membrane translocation by ElxT. The leader peptide may be removed before membrane translocation, in contrast to other lantibiotics for which the cleavage occur after translocation. This is suggested by the probable cytoplasmic localization of the serine protease ElxP that cleaves the leader peptide. In terms of processing, the N-terminal D-lactate is probably produced by dehydration of Ser-25 by ElxB, followed by proteolytic removal of the leader peptide by the serine protease ElxP and hydrolysis of the resulting new N-terminal dehydroalanine. This hydrolysis may occur spontaneously. The pyruvate group thus formed is reduced to D-lactate by the NADPH-dependent oxidoreductase ElxO. This N-terminal D-lactate protects the lantibiotic against degradation against aminopeptidase. It is not established whether the 2,3-didehydrobutyrines are the E- or Z-isomers.

Its function is as follows. Lanthionine-containing peptide antibiotic (lantibiotic) active on Gram-positive bacteria such as staphylococci, enterococci and streptococci. The bactericidal activity of lantibiotics is based on depolarization of energized bacterial cytoplasmic membranes, initiated by the formation of aqueous transmembrane pores. This is Lantibiotic epilancin 15X from Staphylococcus epidermidis.